Consider the following 130-residue polypeptide: MLEKLIKNFATYMGITSTLELDADGAYVLPISEVVKVRAQQNADNEIVLSASLGALPPSADTAKLYLQMMIGNLFGRETGGSALGLDSEGNVVMVRRFSGDTTYDDFVRHVESFMNFSETWLSDLGLGKQ.

This sequence belongs to the chlamydial CPn_0713/CT_663/TC_0034 family.

In Chlamydia pneumoniae (Chlamydophila pneumoniae), this protein is Protein CPn_0713/CP_0033/CPj0713/CpB0740.